Reading from the N-terminus, the 129-residue chain is Cytochrome c oxidase subunit 5B, mitochondrial (129 aa).

The N-terminal 31 residues, 1 to 31, are a transit peptide targeting the mitochondrion; it reads MASRLLRGVGALAAQALRAHGPRGVAATRSM. Lys-68 and Lys-86 each carry N6-acetyllysine. Residues Cys-91, Cys-93, Cys-113, and Cys-116 each contribute to the Zn(2+) site. Lys-121 carries the post-translational modification N6-acetyllysine.

The protein belongs to the cytochrome c oxidase subunit 5B family. In terms of assembly, component of the cytochrome c oxidase (complex IV, CIV), a multisubunit enzyme composed of 14 subunits. The complex is composed of a catalytic core of 3 subunits MT-CO1, MT-CO2 and MT-CO3, encoded in the mitochondrial DNA, and 11 supernumerary subunits COX4I, COX5A, COX5B, COX6A, COX6B, COX6C, COX7A, COX7B, COX7C, COX8 and NDUFA4, which are encoded in the nuclear genome. The complex exists as a monomer or a dimer and forms supercomplexes (SCs) in the inner mitochondrial membrane with NADH-ubiquinone oxidoreductase (complex I, CI) and ubiquinol-cytochrome c oxidoreductase (cytochrome b-c1 complex, complex III, CIII), resulting in different assemblies (supercomplex SCI(1)III(2)IV(1) and megacomplex MCI(2)III(2)IV(2)).

Its subcellular location is the mitochondrion inner membrane. It functions in the pathway energy metabolism; oxidative phosphorylation. Functionally, component of the cytochrome c oxidase, the last enzyme in the mitochondrial electron transport chain which drives oxidative phosphorylation. The respiratory chain contains 3 multisubunit complexes succinate dehydrogenase (complex II, CII), ubiquinol-cytochrome c oxidoreductase (cytochrome b-c1 complex, complex III, CIII) and cytochrome c oxidase (complex IV, CIV), that cooperate to transfer electrons derived from NADH and succinate to molecular oxygen, creating an electrochemical gradient over the inner membrane that drives transmembrane transport and the ATP synthase. Cytochrome c oxidase is the component of the respiratory chain that catalyzes the reduction of oxygen to water. Electrons originating from reduced cytochrome c in the intermembrane space (IMS) are transferred via the dinuclear copper A center (CU(A)) of subunit 2 and heme A of subunit 1 to the active site in subunit 1, a binuclear center (BNC) formed by heme A3 and copper B (CU(B)). The BNC reduces molecular oxygen to 2 water molecules using 4 electrons from cytochrome c in the IMS and 4 protons from the mitochondrial matrix. The polypeptide is Cytochrome c oxidase subunit 5B, mitochondrial (Cox5b) (Rattus norvegicus (Rat)).